The following is a 469-amino-acid chain: 3-isopropylmalate dehydratase large subunit (469 aa).

[4Fe-4S] cluster contacts are provided by Cys349, Cys409, and Cys412.

Belongs to the aconitase/IPM isomerase family. LeuC type 1 subfamily. In terms of assembly, heterodimer of LeuC and LeuD. [4Fe-4S] cluster is required as a cofactor.

The enzyme catalyses (2R,3S)-3-isopropylmalate = (2S)-2-isopropylmalate. The protein operates within amino-acid biosynthesis; L-leucine biosynthesis; L-leucine from 3-methyl-2-oxobutanoate: step 2/4. Functionally, catalyzes the isomerization between 2-isopropylmalate and 3-isopropylmalate, via the formation of 2-isopropylmaleate. The sequence is that of 3-isopropylmalate dehydratase large subunit from Methylorubrum populi (strain ATCC BAA-705 / NCIMB 13946 / BJ001) (Methylobacterium populi).